Reading from the N-terminus, the 279-residue chain is Methyltransferase trt5 (279 aa).

Residues 124–125 (DI) and 152–153 (DV) contribute to the S-adenosyl-L-methionine site.

The protein belongs to the class I-like SAM-binding methyltransferase superfamily. Homodimer.

Its pathway is secondary metabolite biosynthesis; terpenoid biosynthesis. In terms of biological role, methyltransferase; part of the gene cluster that mediates the biosynthesis of terretonin, a fungal meroterpenoid that acts as a mycotoxin. The first step of the pathway is the synthesis of 3,5-dimethylorsellinic acid (DMOA) by the polyketide synthase trt4. DMOA is then prenylated into farnesyl-DMOA by the polyprenyl transferase trt2. Methylation by the methyltransferase trt5 then leads to farnesyl-DMOA methyl ester which is further subject to epoxidation by the FAD-dependent monooxygenase trt8 to yield epoxyfarnesyl-DMOA methyl ester. Cyclization of epoxyfarnesyl-DMOA methyl ester by the terpene cyclase trt1 leads to a tetracycle intermediate which is in turn converted to preterretonin. Dehydrogenase trt9 comes next to transform preterretonin to preterrenoid. The FAD-dependent monooxygenase trt3 is then required for the C-hydroxylation at C16 of preterrenoid to yield terrenoid. The cytochrome P450 trt6 catalyzes three successive oxidations to transform terrenoid into an unstable intermediate, which then undergoes the D-ring expansion and unusual rearrangement of the methoxy group to afford the core skeleton of terretonin. Trt14 catalyzes the D-ring expansion of terretonin involving intramolecular methoxy rearrangement as well as the hydrolysis of the expanded D-ring and the methyl ester moiety. Finally, the nonheme iron-dependent dioxygenase trt7 accomplishes the last two oxidation reactions steps to complete the biosynthesis of terretonin. Terretonin C is produced via spontaneous decarboxylation of the terretonin precursor. Another shunt product of the terretonin biosynthesis is dihydrofarnesyl-DMOA, derived from epoxyfarnesyl-DMOA through hydrolysis of the epoxide. This chain is Methyltransferase trt5, found in Aspergillus terreus (strain NIH 2624 / FGSC A1156).